The sequence spans 288 residues: Bifunctional protein FolD 2 (288 aa).

Residues 166-168 (GRS) and S191 contribute to the NADP(+) site.

The protein belongs to the tetrahydrofolate dehydrogenase/cyclohydrolase family. In terms of assembly, homodimer.

It carries out the reaction (6R)-5,10-methylene-5,6,7,8-tetrahydrofolate + NADP(+) = (6R)-5,10-methenyltetrahydrofolate + NADPH. The enzyme catalyses (6R)-5,10-methenyltetrahydrofolate + H2O = (6R)-10-formyltetrahydrofolate + H(+). Its pathway is one-carbon metabolism; tetrahydrofolate interconversion. Catalyzes the oxidation of 5,10-methylenetetrahydrofolate to 5,10-methenyltetrahydrofolate and then the hydrolysis of 5,10-methenyltetrahydrofolate to 10-formyltetrahydrofolate. This Frankia alni (strain DSM 45986 / CECT 9034 / ACN14a) protein is Bifunctional protein FolD 2.